The sequence spans 180 residues: CASP-like protein 2A3 (180 aa).

Over 1–13 the chain is Cytoplasmic; it reads MELIYGSTMRKKW. The helical transmembrane segment at 14–34 threads the bilayer; it reads IEPALRFLPVGLCISALALML. Over 35–55 the chain is Extracellular; that stretch reads KSKEGNENGILEYKHVGAFRY. The helical transmembrane segment at 56–76 threads the bilayer; that stretch reads LAYANGICAAYSVLSTFNSVV. Topologically, residues 77–85 are cytoplasmic; the sequence is PRSCSLSRA. The helical transmembrane segment at 86–106 threads the bilayer; that stretch reads WFVFVFDQAFTYLMLGAGAVV. At 107–135 the chain is on the extracellular side; the sequence is TEVLYLAYKGDEKITWFEICPYYGRFCNR. Residues 136–156 form a helical membrane-spanning segment; sequence VAASLVISFLALLCFIPLSLI. Topologically, residues 157–180 are cytoplasmic; sequence SAYRVFSKYDPPSLCKKDQITSQS.

The protein belongs to the Casparian strip membrane proteins (CASP) family. As to quaternary structure, homodimer and heterodimers.

It localises to the cell membrane. The sequence is that of CASP-like protein 2A3 from Picea sitchensis (Sitka spruce).